The sequence spans 1744 residues: Probable disease resistance protein At4g19520 (1744 aa).

The region spanning 3–163 (DGKEVYISFN…KIVADVRQKL (161 aa)) is the TIR 1 domain. Residue Glu80 is part of the active site. The 220-residue stretch at 192-411 (SLGIWGMAGI…VSEKEIFLDI (220 aa)) folds into the NB-ARC domain. LRR repeat units lie at residues 503–526 (YEDVKAINLDTSNLPFKGHIAFQH), 557–581 (PPELRLLHWTCYPLHSFPQNFGFQY), 583–602 (VELNMPCSKLKKLWGGTKNL), 603–626 (EVLKRITLSCSVQLLNVDELQYSP), 648–669 (LQHLRIVDLSTCKKIKSFPKVP), 670–692 (PSIRKLHLQGTGIRDLSSLNHSS), 710–733 (DHRKQVLKLKDSSHLGSLPDIVIF), 734–754 (ESLEVLDFSGCSELEDIQGFP), 755–777 (QNLKRLYLAKTAIKEVPSSLCHH), 779–802 (SKLVKLDMENCERLRDLPMGMSNM), 804–823 (YLAVLKLSGCSNLENIKELP), 824–846 (RNLKELYLAGTAVKEFPSTLLET), 848–871 (SEVVLLDLENCKKLQGLPTGMSKL), 892–915 (PLNLIELYLAGTAIRELPPSIGDL), 917–939 (LLDTLDLKNCNRLRHLPMEMHNL), 941–963 (PLKVLDLSNCSELEVFTSSLPKV), 987–1010 (YEHRVTLSLYKARLQYIPEEIRWM), 1011–1035 (PSLKTLDLSRNGFTEVPVSIKDFSK), 1037–1059 (LSLRLRYCENLRSLPQLPRSLQL), and 1062–1086 (AHGCSSLQLITPDFKQLPRYYTFSN). The region spanning 1399–1559 (RNNDVFVSFH…KVANDIRKKL (161 aa)) is the TIR 2 domain.

This sequence belongs to the disease resistance TIR-NB-LRR family.

It carries out the reaction NAD(+) + H2O = ADP-D-ribose + nicotinamide + H(+). Functionally, probable disease resistance protein. The polypeptide is Probable disease resistance protein At4g19520 (Arabidopsis thaliana (Mouse-ear cress)).